The sequence spans 119 residues: Ethylene-responsive proteinase inhibitor 1 (119 aa).

Residues 1 to 27 form the signal peptide; the sequence is MEANKSMVKLVAFLIILVSSCFQSLTA. A propeptide spanning residues 28 to 48 is cleaved from the precursor; that stretch reads QDLEIEVSDGLNVLQVHDVSQ.

This sequence belongs to the protease inhibitor I13 (potato type I serine protease inhibitor) family.

It is found in the secreted. The sequence is that of Ethylene-responsive proteinase inhibitor 1 from Solanum lycopersicum (Tomato).